The following is a 436-amino-acid chain: GTPase Der (436 aa).

2 consecutive EngA-type G domains span residues 4–167 (PIVA…DEET) and 176–351 (IRLS…ENHK). GTP contacts are provided by residues 10 to 17 (GRPNVGKS), 57 to 61 (DTGGI), 119 to 122 (NKVD), 182 to 189 (GRPNVGKS), 229 to 233 (DTAGM), and 294 to 297 (NKWD). Residues 352–436 (KRVQSSTLNE…PIHIIPRRRN (85 aa)) form the KH-like domain.

It belongs to the TRAFAC class TrmE-Era-EngA-EngB-Septin-like GTPase superfamily. EngA (Der) GTPase family. As to quaternary structure, associates with the 50S ribosomal subunit.

Its function is as follows. GTPase that plays an essential role in the late steps of ribosome biogenesis. The chain is GTPase Der from Staphylococcus haemolyticus (strain JCSC1435).